Reading from the N-terminus, the 328-residue chain is Bcl-2/adenovirus E1B 19 kDa-interacting protein 2-like protein (328 aa).

Residues 1–22 (MKLGELELREEWQDEEFPRLLP) show a composition bias toward basic and acidic residues. Residues 1 to 116 (MKLGELELRE…DSGHEFEWED (116 aa)) form a disordered region. Polar residues predominate over residues 36–45 (RGSQAGTPSS). Residues 76 to 89 (ASPTRSASSSSAGS) are compositionally biased toward low complexity. A compositionally biased stretch (acidic residues) spans 92–105 (LEVDELETPSDSEQ). The span at 107 to 116 (DSGHEFEWED) shows a compositional bias: basic and acidic residues. The region spanning 162–323 (DMTIIEPYKK…VVRQLDRDLH (162 aa)) is the CRAL-TRIO domain.

In terms of assembly, homodimer. Interacts with BCL2, ARHGAP1, MIF and GFER.

May be a bridge molecule between BCL2 and ARHGAP1/CDC42 in promoting cell death. The chain is Bcl-2/adenovirus E1B 19 kDa-interacting protein 2-like protein (Bnipl) from Mus musculus (Mouse).